A 79-amino-acid polypeptide reads, in one-letter code: Major outer membrane lipoprotein Lpp 3 (79 aa).

An N-terminal signal peptide occupies residues 1–21 (MNRTNKLILGAVVLGSALLAG). Cysteine 22 is lipidated: N-palmitoyl cysteine. Cysteine 22 carries S-diacylglycerol cysteine lipidation. 2 consecutive repeats follow at residues 25 to 35 (NAKIDQLSSDV) and 39 to 49 (SAKVDQLSNDV). Residues 28 to 76 (IDQLSSDVQTLSAKVDQLSNDVNAMRSDVQAAKDDAARANQRLDNKVLR) adopt a coiled-coil conformation. Position 79 is an N6-murein peptidoglycan lysine (lysine 79).

It belongs to the Lpp family. As to quaternary structure, homotrimer.

The protein resides in the cell outer membrane. It localises to the secreted. Its subcellular location is the cell wall. Functionally, a highly abundant outer membrane lipoprotein that controls the distance between the inner and outer membranes. The only protein known to be covalently linked to the peptidoglycan network (PGN). Also non-covalently binds the PGN. The link between the cell outer membrane and PGN contributes to maintenance of the structural and functional integrity of the cell envelope, and maintains the correct distance between the PGN and the outer membrane. The chain is Major outer membrane lipoprotein Lpp 3 from Salmonella paratyphi A (strain ATCC 9150 / SARB42).